The following is a 488-amino-acid chain: Glutamyl-tRNA(Gln) amidotransferase subunit B, mitochondrial (488 aa).

It belongs to the GatB/GatE family. GatB subfamily. Subunit of the heterotrimeric GatFAB amidotransferase (AdT) complex, composed of A, B and F subunits.

The protein localises to the mitochondrion. The catalysed reaction is L-glutamyl-tRNA(Gln) + L-glutamine + ATP + H2O = L-glutaminyl-tRNA(Gln) + L-glutamate + ADP + phosphate + H(+). Functionally, allows the formation of correctly charged Gln-tRNA(Gln) through the transamidation of misacylated Glu-tRNA(Gln) in the mitochondria. The reaction takes place in the presence of glutamine and ATP through an activated gamma-phospho-Glu-tRNA(Gln). The chain is Glutamyl-tRNA(Gln) amidotransferase subunit B, mitochondrial from Candida albicans (strain SC5314 / ATCC MYA-2876) (Yeast).